The chain runs to 490 residues: uncharacterized protein (490 aa).

Over residues 370–385 the composition is skewed to low complexity; sequence FSMKRPSSSSSSLSGS. Positions 370–406 are disordered; it reads FSMKRPSSSSSSLSGSWHGDTENSVKQSLASPSEASL. Polar residues predominate over residues 391–406; it reads ENSVKQSLASPSEASL.

Its subcellular location is the cytoplasm. It is found in the nucleus. This is an uncharacterized protein from Schizosaccharomyces pombe (strain 972 / ATCC 24843) (Fission yeast).